A 298-amino-acid chain; its full sequence is Glyoxalase domain-containing protein 4 (298 aa).

A VOC 1 domain is found at 5-130 (RALHFVFKVG…GGYKFYLQDR (126 aa)). Residue Lys-109 is modified to N6-succinyllysine. Ser-131 carries the post-translational modification Phosphoserine. The VOC 2 domain occupies 137-258 (PVLKVTLAVS…DGHEICFVGD (122 aa)). At Lys-273 the chain carries N6-succinyllysine.

Belongs to the glyoxalase I family. As to quaternary structure, interacts with NUDT9.

The protein localises to the mitochondrion. This is Glyoxalase domain-containing protein 4 (Glod4) from Rattus norvegicus (Rat).